A 159-amino-acid chain; its full sequence is Dihydrofolate reductase (159 aa).

Residues 2-157 (TLSILVAHDL…IPHTFLHLIR (156 aa)) enclose the DHFR domain. 6–8 (LVA) contributes to the substrate binding site. NADP(+) is bound by residues 7 to 8 (VA) and 15 to 20 (IGFENQ). Substrate is bound at residue aspartate 28. 44–47 (GRKT) contacts NADP(+). Arginine 58 is a substrate binding site. NADP(+)-binding positions include 63 to 66 (LTSD) and 93 to 98 (FGGQIL). A substrate-binding site is contributed by threonine 112.

It belongs to the dihydrofolate reductase family.

The enzyme catalyses (6S)-5,6,7,8-tetrahydrofolate + NADP(+) = 7,8-dihydrofolate + NADPH + H(+). Its pathway is cofactor biosynthesis; tetrahydrofolate biosynthesis; 5,6,7,8-tetrahydrofolate from 7,8-dihydrofolate: step 1/1. Key enzyme in folate metabolism. Catalyzes an essential reaction for de novo glycine and purine synthesis, and for DNA precursor synthesis. This Staphylococcus aureus (strain MW2) protein is Dihydrofolate reductase (folA).